We begin with the raw amino-acid sequence, 802 residues long: Cell division cycle 5-like protein (802 aa).

HTH myb-type domains lie at 1–56 (MPRI…WLDP) and 57–108 (SIKK…DKAA). 2 consecutive DNA-binding regions (H-T-H motif) follow at residues 31–54 (WSRI…YEWL) and 82–104 (WRTI…EFLL). The interval 108–143 (AQRDNEEETTDDPRKLKPGEIDPNPETKPARPDPID) is disordered. Basic and acidic residues predominate over residues 118–127 (DDPRKLKPGE). A Glycyl lysine isopeptide (Lys-Gly) (interchain with G-Cter in SUMO2) cross-link involves residue K135. Residues 142–245 (IDMDEDELEM…DADFRKLRQQ (104 aa)) are a coiled coil. Positions 165–271 (KKAKRKAREK…KDKQHLKRKK (107 aa)) match the Nuclear localization signal motif. A required for interaction with CTNNBL1 region spans residues 200–206 (KKRKKKR). K219 is covalently cross-linked (Glycyl lysine isopeptide (Lys-Gly) (interchain with G-Cter in SUMO2)). T227 is modified (phosphothreonine). Positions 246 to 262 (DLDGELRSEKEGRDRKK) are enriched in basic and acidic residues. The interval 246–278 (DLDGELRSEKEGRDRKKDKQHLKRKKESDLPSA) is disordered. Positions 260-606 (RKKDKQHLKR…NKKGKTVGFG (347 aa)) are interaction with PPP1R8. S303 and S358 each carry phosphoserine. Phosphothreonine is present on residues T377, T385, T396, T404, T411, and T415. Positions 409 to 418 (LSTPFRTPSH) are enriched in polar residues. Residues 409-459 (LSTPFRTPSHGSEGLTPRSGTTPKPVINSTPGRTPLRDKLNINPEDGMADY) form a disordered region. A Phosphoserine modification is found at S417. Residues T424 and T430 each carry the phosphothreonine modification. The span at 426-440 (RSGTTPKPVINSTPG) shows a compositional bias: polar residues. The residue at position 437 (S437) is a Phosphoserine. A phosphothreonine mark is found at T438 and T442. Residue K487 forms a Glycyl lysine isopeptide (Lys-Gly) (interchain with G-Cter in SUMO2) linkage. The interval 501 to 659 (ELEEREIDDT…GELSSEAYNQ (159 aa)) is interaction with DAPK3. 2 coiled-coil regions span residues 676-701 (RYTR…INRG) and 764-802 (PRRL…KAKF). The tract at residues 706–800 (EAKRAAKMEK…LLLEKETLKA (95 aa)) is interaction with PLRG1.

Belongs to the CEF1 family. As to quaternary structure, homodimer. Interacts with DAPK3. Component of the precatalytic, catalytic and postcatalytic spliceosome complexes. Part of a spliceosomal 'core' complex consisting of CDC5L, PLRG1, SPF27, CCAP1, CCAP3 and CCAP6. Interacts with PLRG1, Lodestar/TTF2, and NIPP1/PPP1R8. Component of the minor spliceosome, which splices U12-type introns. Within this complex, interacts with SCNM1. Component of the PRP19-CDC5L splicing complex composed of a core complex comprising a homotetramer of PRPF19, CDC5L, PLRG1 and BCAS2, and at least three less stably associated proteins CTNNBL1, CWC15 and HSPA8. Interacts (via its C-terminus) directly in the complex with PRPF19 and BCAS2. Interacts (via its C-terminus) directly with PRGL1 (via its WD40 repeat domain); the interaction is required for mRNA splicing but not for spliceosome assembly. Also interacts with CTNNBL1. Interacts with PRPF19 (via N-terminus). Interacts with USB1. Interacts with DDX41. Post-translationally, phosphorylated on serine and threonine residues. Phosphorylation on Thr-411 and Thr-438 is required for CDC5L-mediated mRNA splicing. Has no effect on subcellular location nor on homodimerization. Phosphorylated in vitro by CDK2. Phosphorylation enhances interaction with PPP1R8.

It localises to the nucleus. The protein localises to the nucleus speckle. The protein resides in the cytoplasm. In terms of biological role, DNA-binding protein involved in cell cycle control. May act as a transcription activator. Plays a role in pre-mRNA splicing as core component of precatalytic, catalytic and postcatalytic spliceosomal complexes. Component of the PRP19-CDC5L complex that forms an integral part of the spliceosome and is required for activating pre-mRNA splicing. The PRP19-CDC5L complex may also play a role in the response to DNA damage (DDR). As a component of the minor spliceosome, involved in the splicing of U12-type introns in pre-mRNAs. This is Cell division cycle 5-like protein (CDC5L) from Bos taurus (Bovine).